Here is a 316-residue protein sequence, read N- to C-terminus: Ribonuclease HIII (316 aa).

Residues 101–316 (QVIIGSDEVG…SNFQQIIKNK (216 aa)) form the RNase H type-2 domain. A divalent metal cation contacts are provided by D107, E108, and D211.

Belongs to the RNase HII family. RnhC subfamily. The cofactor is Mn(2+). Requires Mg(2+) as cofactor.

It localises to the cytoplasm. It carries out the reaction Endonucleolytic cleavage to 5'-phosphomonoester.. Its function is as follows. Endonuclease that specifically degrades the RNA of RNA-DNA hybrids. The protein is Ribonuclease HIII (rnhC) of Ureaplasma parvum serovar 3 (strain ATCC 700970).